The primary structure comprises 584 residues: uncharacterized protein (584 aa).

Disordered stretches follow at residues 151-188 (EHPP…DNDL), 222-243 (KRKE…SRAN), 399-418 (SETP…PPDF), and 433-584 (MQPS…AKSD). Basic and acidic residues predominate over residues 159 to 188 (TSSEKTRSENRERKKRWREQNEERNKDNDL). Positions 231–243 (LSQNQSSNASRAN) are enriched in low complexity. 5 stretches are compositionally biased toward polar residues: residues 399–409 (SETPTPVSGNG), 433–453 (MQPS…SSEM), 483–500 (NAVT…SGSP), 511–531 (NYSQ…SSLP), and 572–584 (QRSS…AKSD).

This is an uncharacterized protein from Schizosaccharomyces pombe (strain 972 / ATCC 24843) (Fission yeast).